The chain runs to 1474 residues: Alpha-2-macroglobulin (1474 aa).

A signal peptide spans 1–23; the sequence is MGKNKLLHPSLVLLLLVLLPTDA. Residues cysteine 48 and cysteine 86 are joined by a disulfide bond. Asparagine 55 carries N-linked (GlcNAc...) (complex) asparagine glycosylation. Residues asparagine 70 and asparagine 247 are each glycosylated (N-linked (GlcNAc...) asparagine). Disulfide bonds link cysteine 251–cysteine 299 and cysteine 269–cysteine 287. Residues asparagine 396 and asparagine 410 are each glycosylated (N-linked (GlcNAc...) asparagine). 8 cysteine pairs are disulfide-bonded: cysteine 470–cysteine 563, cysteine 595–cysteine 771, cysteine 642–cysteine 689, cysteine 821–cysteine 849, cysteine 847–cysteine 883, cysteine 921–cysteine 1321, cysteine 1079–cysteine 1127, and cysteine 1352–cysteine 1467. Residues 690–728 are bait region; it reads PQLQQYEMHGPEGLRVGFYESDVMGRGHARLVHVEEPHT. Residues glutamine 693 and glutamine 694 each participate in an isoglutamyl lysine isopeptide (Gln-Lys) (interchain with K-? in other proteins) cross-link. Inhibitory stretches follow at residues 704–709, 719–723, and 730–735; these read RVGFYE, RLVHV, and TVRKYF. An N-linked (GlcNAc...) asparagine glycan is attached at asparagine 869. A cross-link (isoglutamyl cysteine thioester (Cys-Gln)) is located at residues 972 to 975; it reads CGEQ. Asparagine 991 is a glycosylation site (N-linked (GlcNAc...) asparagine). Asparagine 1424 carries an N-linked (GlcNAc...) (complex) asparagine glycan.

It belongs to the protease inhibitor I39 (alpha-2-macroglobulin) family. In terms of assembly, homotetramer; disulfide-linked. In terms of tissue distribution, secreted in plasma.

The protein localises to the secreted. Its function is as follows. Is able to inhibit all four classes of proteinases by a unique 'trapping' mechanism. This protein has a peptide stretch, called the 'bait region' which contains specific cleavage sites for different proteinases. When a proteinase cleaves the bait region, a conformational change is induced in the protein which traps the proteinase. The entrapped enzyme remains active against low molecular weight substrates (activity against high molecular weight substrates is greatly reduced). Following cleavage in the bait region, a thioester bond is hydrolyzed and mediates the covalent binding of the protein to the proteinase. The sequence is that of Alpha-2-macroglobulin (A2M) from Homo sapiens (Human).